The chain runs to 547 residues: Nuclear speckle splicing regulatory protein 1 (547 aa).

A disordered region spans residues 25–51; the sequence is KPSVFGNDSDDDEASVSESLQREAAKK. Phosphoserine occurs at positions 27 and 33. Residues 103 to 177 are a coiled coil; that stretch reads IHNLLKAVEI…EARLDVTKQK (75 aa). The segment at 105 to 169 is necessary for alternative splicing activity; sequence NLLKAVEIRK…REKRAAALEA (65 aa). The tract at residues 188-523 is disordered; the sequence is NQAVGEEAVP…KRSNEETVMS (336 aa). Glycyl lysine isopeptide (Lys-Gly) (interchain with G-Cter in SUMO2) cross-links involve residues lysine 198 and lysine 209. Over residues 200 to 217 the composition is skewed to basic and acidic residues; that stretch reads SFREARTVIKEEKLRGYP. Polar residues predominate over residues 223–232; it reads ENRPQQNCAL. Residues 237-254 show a composition bias toward acidic residues; that stretch reads EEAEENPDADSDSEESCD. Phosphoserine occurs at positions 247 and 252. The span at 255–269 shows a compositional bias: basic and acidic residues; that stretch reads DGERGDHKVKSRGEE. N6-acetyllysine is present on lysine 276. Residues 277–287 show a composition bias toward basic residues; the sequence is YLKHHKNHTHS. Residue lysine 279 forms a Glycyl lysine isopeptide (Lys-Gly) (interchain with G-Cter in SUMO2) linkage. The segment covering 308 to 339 has biased composition (basic and acidic residues); it reads RGHEHKGGQHQDRQSRDQESCHKDRSHREEKS. Basic residues predominate over residues 340–355; sequence SHRHREASHKDHHWKR. Basic and acidic residues-rich tracts occupy residues 356–480 and 490–506; these read HEHE…KPPR and RLTEERPEKGSQPERPP. Residues 376-417 adopt a coiled-coil conformation; the sequence is KREKYSSREQEKDRQWNDHDRYSEKEKKGKEKEEHRKARRER. Serine 447 is modified (phosphoserine).

This sequence belongs to the NSRP1 family. Interacts (via C-terminus) with SRSF1. Interacts (via C-terminus) with SRSF2.

It is found in the nucleus. The protein resides in the nucleus speckle. RNA-binding protein that mediates pre-mRNA alternative splicing regulation. The chain is Nuclear speckle splicing regulatory protein 1 (Nsrp1) from Rattus norvegicus (Rat).